A 164-amino-acid polypeptide reads, in one-letter code: Putative pre-16S rRNA nuclease (164 aa).

Belongs to the YqgF nuclease family.

Its subcellular location is the cytoplasm. In terms of biological role, could be a nuclease involved in processing of the 5'-end of pre-16S rRNA. In Caulobacter sp. (strain K31), this protein is Putative pre-16S rRNA nuclease.